The following is a 1487-amino-acid chain: Golgin subfamily A member 3 (1487 aa).

Position 1 is an N-acetylmethionine (methionine 1). The disordered stretch occupies residues 1–118; sequence MDGASAKQDG…GTSAEGSVRK (118 aa). Phosphoserine occurs at positions 18 and 60. Positions 62-74 are enriched in polar residues; it reads DRSSQVAICQNGQ. An interaction with GOPC region spans residues 121–141; sequence LQSLRLSLPMQETQLCSTASS. The golgi-targeting domain stretch occupies residues 172–257; the sequence is ERSSQPATKM…DYRTEDPSDS (86 aa). Disordered stretches follow at residues 221 to 321 and 365 to 394; these read PKVG…SSLS and AAQH…SMES. Low complexity-rich tracts occupy residues 269-288, 312-321, and 365-375; these read SSLK…SPSS, SDSSSHSSLS, and AAQHQDQNQEA. Phosphoserine is present on serine 270. A coiled-coil region spans residues 358-1454; the sequence is KDVLQAAAAQ…TITVHESLSS (1097 aa). Phosphoserine is present on residues serine 381, serine 385, and serine 461. Basic and acidic residues predominate over residues 785–796; that stretch reads KEELDRGARRLE. Positions 785–804 are disordered; it reads KEELDRGARRLEEDTEETSG. Serine 979 bears the Phosphoserine mark. A compositionally biased stretch (basic and acidic residues) spans 1372-1382; it reads RGAAKKKEPKG. Disordered regions lie at residues 1372-1396 and 1458-1487; these read RGAA…IKIP and VEAA…GLGQ. Serine 1387 is modified (phosphoserine). A compositionally biased stretch (basic and acidic residues) spans 1462–1474; the sequence is PAEHAHPRGDTKL. Serine 1479 is subject to Phosphoserine.

Homodimer. Interacts with GOLGA7. Interacts with GOPC. In terms of processing, cleaved by caspases in apoptotic cells. Highly expressed in testis. Transcripts can be found in spermatids during spermatogenesis. No expression in Leydig cells, spermatogonia or spermatocytes. Detected at low levels in all tissues.

It is found in the cytoplasm. The protein resides in the golgi apparatus. It localises to the golgi stack membrane. Its function is as follows. Plays an important role in spermatogenesis and/or testis development. Probably identical with the serologically detectable male antigen (SDM). Probably involved in maintaining Golgi structure. The protein is Golgin subfamily A member 3 (Golga3) of Mus musculus (Mouse).